The following is an 88-amino-acid chain: Large ribosomal subunit protein bL27 (88 aa).

Positions 1-21 (MAHKKGQGSTQNNRDSAGRRL) are disordered.

Belongs to the bacterial ribosomal protein bL27 family.

The protein is Large ribosomal subunit protein bL27 of Helicobacter acinonychis (strain Sheeba).